The chain runs to 766 residues: 5-methyltetrahydropteroyltriglutamate--homocysteine methyltransferase (766 aa).

Residues 23–26 (RELK) and Lys-121 each bind 5-methyltetrahydropteroyltri-L-glutamate. L-homocysteine contacts are provided by residues 438-440 (IGS) and Glu-491. L-methionine is bound by residues 438-440 (IGS) and Glu-491. 5-methyltetrahydropteroyltri-L-glutamate-binding positions include 522–523 (RC) and Trp-568. Position 606 (Asp-606) interacts with L-homocysteine. Asp-606 lines the L-methionine pocket. 5-methyltetrahydropteroyltri-L-glutamate is bound at residue Glu-612. Zn(2+) contacts are provided by His-648, Cys-650, and Glu-672. Catalysis depends on His-701, which acts as the Proton donor. Cys-733 provides a ligand contact to Zn(2+).

It belongs to the vitamin-B12 independent methionine synthase family. The cofactor is Zn(2+).

It carries out the reaction 5-methyltetrahydropteroyltri-L-glutamate + L-homocysteine = tetrahydropteroyltri-L-glutamate + L-methionine. It participates in amino-acid biosynthesis; L-methionine biosynthesis via de novo pathway; L-methionine from L-homocysteine (MetE route): step 1/1. Functionally, catalyzes the transfer of a methyl group from 5-methyltetrahydrofolate to homocysteine resulting in methionine formation. This Photobacterium profundum (strain SS9) protein is 5-methyltetrahydropteroyltriglutamate--homocysteine methyltransferase.